The chain runs to 482 residues: Aspartyl/glutamyl-tRNA(Asn/Gln) amidotransferase subunit B (482 aa).

This sequence belongs to the GatB/GatE family. GatB subfamily. In terms of assembly, heterotrimer of A, B and C subunits.

It carries out the reaction L-glutamyl-tRNA(Gln) + L-glutamine + ATP + H2O = L-glutaminyl-tRNA(Gln) + L-glutamate + ADP + phosphate + H(+). The catalysed reaction is L-aspartyl-tRNA(Asn) + L-glutamine + ATP + H2O = L-asparaginyl-tRNA(Asn) + L-glutamate + ADP + phosphate + 2 H(+). Allows the formation of correctly charged Asn-tRNA(Asn) or Gln-tRNA(Gln) through the transamidation of misacylated Asp-tRNA(Asn) or Glu-tRNA(Gln) in organisms which lack either or both of asparaginyl-tRNA or glutaminyl-tRNA synthetases. The reaction takes place in the presence of glutamine and ATP through an activated phospho-Asp-tRNA(Asn) or phospho-Glu-tRNA(Gln). This chain is Aspartyl/glutamyl-tRNA(Asn/Gln) amidotransferase subunit B, found in Methanoregula boonei (strain DSM 21154 / JCM 14090 / 6A8).